The primary structure comprises 375 residues: Growth/differentiation factor 8 (375 aa).

The N-terminal stretch at 1 to 23 (MQKLAVYVYIYLFMLISVDPVAL) is a signal peptide. A propeptide spanning residues 24-266 (DDGSQPTENA…VTDTPKRSRR (243 aa)) is cleaved from the precursor. N71 is a glycosylation site (N-linked (GlcNAc...) asparagine). 4 disulfide bridges follow: C272–C282, C281–C340, C309–C372, and C313–C374.

Belongs to the TGF-beta family. As to quaternary structure, homodimer; disulfide-linked.

The protein resides in the secreted. Functionally, acts specifically as a negative regulator of skeletal muscle growth. The sequence is that of Growth/differentiation factor 8 (MSTN) from Anser anser anser (Western greylag goose).